Here is a 2444-residue protein sequence, read N- to C-terminus: Protein SON (2444 aa).

Ala-2 is subject to N-acetylalanine. Position 16 is an N6-acetyllysine (Lys-16). The segment covering 23-37 (ELSSGRSEGQLNGET) has biased composition (polar residues). The interval 23–58 (ELSSGRSEGQLNGETNPPIEGNQAGDTAASARSLPN) is disordered. Lys-64 is covalently cross-linked (Glycyl lysine isopeptide (Lys-Gly) (interchain with G-Cter in SUMO2)). Residues 79-88 (YKPDLKEASR) are compositionally biased toward basic and acidic residues. Residues 79–155 (YKPDLKEASR…GNLESDSFLK (77 aa)) are disordered. Ser-94 bears the Phosphoserine mark. Over residues 106 to 130 (KKSKKHKKHKNKKKKKKKEKEKKYK) the composition is skewed to basic residues. Residues 131–155 (RQPEESESKLKSHHDGNLESDSFLK) show a composition bias toward basic and acidic residues. A phosphoserine mark is found at Ser-142, Ser-150, Ser-152, and Ser-158. Residue Lys-284 is modified to N6-acetyllysine. Disordered stretches follow at residues 301-358 (TLTI…ESLE) and 391-468 (GPPV…PEPP). 2 stretches are compositionally biased toward pro residues: residues 393–406 (PVTP…PSAT) and 420–439 (PELP…PSVT). At Thr-395 the chain carries Phosphothreonine. Positions 721–850 (LASNTMDSQM…LATSSMDSQM (130 aa)) are 13 X 10 AA tandem repeats of L-A-[ST]-[NSG]-[TS]-MDSQM. Positions 907–983 (DPYRLAQDPY…IAPRPYRLAP (77 aa)) are 11 X 7 AA tandem repeats of [DR]-P-Y-R-[LI][AG][QHP]. Arg-945 is subject to Omega-N-methylarginine. Residue Thr-954 is modified to Phosphothreonine. Position 993 is a phosphoserine (Ser-993). Repeat copies occupy residues 1001–1006 (ERSMMS), 1009–1014 (ERSMMS), 1016–1021 (ERSMMS), 1025–1030 (ERSMMS), 1033–1038 (ERSMMS), 1041–1046 (ERSMMS), 1050–1055 (ERSMMS), 1058–1063 (ERSMMS), 1066–1071 (ERSMMS), 1075–1080 (DRSMMS), 1084–1089 (DRSMMS), 1095–1100 (DRSMMS), 1106–1111 (DRSMMS), and 1115–1120 (DRSMMS). Residues 1001–1120 (ERSMMSSYER…SSYTDRSMMS (120 aa)) form a 14 X 6 AA repeats of [ED]-R-S-M-M-S region. Position 1002 is an asymmetric dimethylarginine (Arg-1002). Arg-1017 is modified (asymmetric dimethylarginine). Ser-1030 and Ser-1038 each carry phosphoserine. Phosphoserine is present on residues Ser-1055 and Ser-1063. A Phosphoserine modification is found at Ser-1077. Over residues 1141-1168 (PPLPPEEPPTMPPLPPEEPPMTPPLPPE) the composition is skewed to pro residues. The interval 1141-1173 (PPLPPEEPPTMPPLPPEEPPMTPPLPPEEPPEG) is 3 X 11 AA tandem repats of P-P-L-P-P-E-E-P-P-[TME]-[MTG]. The tract at residues 1141 to 1213 (PPLPPEEPPT…PEPPVSQSEI (73 aa)) is disordered. A compositionally biased stretch (polar residues) spans 1177 to 1213 (STEQSALTADNTWSTEVTLSTGESLSQPEPPVSQSEI). Phosphoserine is present on residues Ser-1678, Ser-1723, Ser-1727, Ser-1772, Ser-1784, Ser-1791, Ser-1794, Ser-1807, and Ser-1808. Residues 1802–2072 (ERASESSSEE…RSPKRLTDLD (271 aa)) form a disordered region. Composition is skewed to basic and acidic residues over residues 1815–1826 (YEIFVKVKDTHE), 1834–1847 (RDKG…DSSL), and 1855–1870 (KSSE…ESRS). Composition is skewed to basic residues over residues 1871-1934 (RARK…RKRS) and 1942-1973 (AARA…RRRS). Tandem repeats lie at residues 1950-1956 (PSRRSRS), 1959-1977 (PSRR…FSIS), 1978-1984 (PSRRSRT), 1985-1991 (PSRRSRT), 1992-1998 (PSRRSRT), 1999-2005 (PSRRSRT), and 2006-2012 (PSRRSRT). Positions 1950–2019 (PSRRSRSHTP…SRTPSRRRRS (70 aa)) are 7 X 7 AA repeats of P-S-R-R-S-R-[TS]. The 2 X 19 AA repeats of P-S-R-R-R-R-S-R-S-V-V-R-R-R-S-F-S-I-S stretch occupies residues 1959–2030 (PSRRRRSRSV…SAVRRRSFSI (72 aa)). Ser-1973, Ser-1975, and Ser-1977 each carry phosphoserine. The span at 1980–2027 (RRSRTPSRRSRTPSRRSRTPSRRSRTPSRRSRTPSRRRRSRSAVRRRS) shows a compositional bias: basic residues. Residues 2013–2019 (PSRRRRS) form a 2-7; approximate repeat. The 3-2; approximate repeat unit spans residues 2020–2030 (RSAVRRRSFSI). Residues Ser-2027, Ser-2029, Ser-2031, Ser-2047, and Ser-2049 each carry the phosphoserine modification. The interval 2031-2057 (SPVRLRRSRTPLRRRFSRSPIRRKRSR) is 3 X tandem repeats of [ST]-P-[VLI]-R-[RL]-[RK]-[RF]-S-R. The segment covering 2034–2056 (RLRRSRTPLRRRFSRSPIRRKRS) has biased composition (basic residues). Residues 2057-2072 (RSSERGRSPKRLTDLD) are compositionally biased toward basic and acidic residues. Lys-2073 is modified (N6-acetyllysine; alternate). Residue Lys-2073 forms a Glycyl lysine isopeptide (Lys-Gly) (interchain with G-Cter in SUMO2); alternate linkage. A Glycyl lysine isopeptide (Lys-Gly) (interchain with G-Cter in SUMO2) cross-link involves residue Lys-2110. At Ser-2147 the chain carries Phosphoserine. Residue Lys-2167 forms a Glycyl lysine isopeptide (Lys-Gly) (interchain with G-Cter in SUMO2) linkage. Phosphothreonine is present on Thr-2181. Residues 2192-2238 (EFPVSSGSQHRKKEADSVYGEWVPVEKNGEESKDDDNVFSSSLPSEP) form a disordered region. Phosphoserine is present on Ser-2256. Residues 2323-2369 (TGGMGAVLMRKMGWREGEGLGKNKEGNKEPILVDFKTDRKGLVAVGE) enclose the G-patch domain. Residues 2389-2444 (HPVSALMEICNKRRWQPPEFLLVHDSGPDHRKHFLFRVLRNGSPYQPNCMFFLNRY) form the DRBM domain.

Interacts with SRSF2. Associates with the spliceosome. Interacts with USH1G. In terms of tissue distribution, widely expressed. Highly expressed in brain, heart, spleen, liver, skeletal muscle, kidney and testis.

Its subcellular location is the nucleus speckle. Its function is as follows. RNA-binding protein that acts as a mRNA splicing cofactor by promoting efficient splicing of transcripts that possess weak splice sites. Specifically promotes splicing of many cell-cycle and DNA-repair transcripts that possess weak splice sites, such as TUBG1, KATNB1, TUBGCP2, AURKB, PCNT, AKT1, RAD23A, and FANCG. Probably acts by facilitating the interaction between Serine/arginine-rich proteins such as SRSF2 and the RNA polymerase II. Also binds to DNA; binds to the consensus DNA sequence: 5'-GA[GT]AN[CG][AG]CC-3'. Essential for correct RNA splicing of multiple genes critical for brain development, neuronal migration and metabolism, including TUBG1, FLNA, PNKP, WDR62, PSMD3, PCK2, PFKL, IDH2, and ACY1. May also regulate the ghrelin signaling in hypothalamic neuron by acting as a negative regulator of GHSR expression. The polypeptide is Protein SON (Son) (Mus musculus (Mouse)).